The primary structure comprises 863 residues: Leucine--tRNA ligase (863 aa).

A 'HIGH' region motif is present at residues 42-52; it reads PYPSGKLHMGH. Residues 623-627 carry the 'KMSKS' region motif; it reads KMSKS. Lys626 contacts ATP.

This sequence belongs to the class-I aminoacyl-tRNA synthetase family.

The protein resides in the cytoplasm. The catalysed reaction is tRNA(Leu) + L-leucine + ATP = L-leucyl-tRNA(Leu) + AMP + diphosphate. The chain is Leucine--tRNA ligase from Paraburkholderia xenovorans (strain LB400).